The chain runs to 364 residues: tRNA 2-selenouridine synthase (364 aa).

The 124-residue stretch at 14–137 folds into the Rhodanese domain; sequence LIADTPIIDV…LRQTAIQATI (124 aa). Residue Cys97 is the S-selanylcysteine intermediate of the active site.

The protein belongs to the SelU family. As to quaternary structure, monomer.

The catalysed reaction is 5-methylaminomethyl-2-thiouridine(34) in tRNA + selenophosphate + (2E)-geranyl diphosphate + H2O + H(+) = 5-methylaminomethyl-2-selenouridine(34) in tRNA + (2E)-thiogeraniol + phosphate + diphosphate. The enzyme catalyses 5-methylaminomethyl-2-thiouridine(34) in tRNA + (2E)-geranyl diphosphate = 5-methylaminomethyl-S-(2E)-geranyl-thiouridine(34) in tRNA + diphosphate. It carries out the reaction 5-methylaminomethyl-S-(2E)-geranyl-thiouridine(34) in tRNA + selenophosphate + H(+) = 5-methylaminomethyl-2-(Se-phospho)selenouridine(34) in tRNA + (2E)-thiogeraniol. It catalyses the reaction 5-methylaminomethyl-2-(Se-phospho)selenouridine(34) in tRNA + H2O = 5-methylaminomethyl-2-selenouridine(34) in tRNA + phosphate. Functionally, involved in the post-transcriptional modification of the uridine at the wobble position (U34) of tRNA(Lys), tRNA(Glu) and tRNA(Gln). Catalyzes the conversion of 2-thiouridine (S2U-RNA) to 2-selenouridine (Se2U-RNA). Acts in a two-step process involving geranylation of 2-thiouridine (S2U) to S-geranyl-2-thiouridine (geS2U) and subsequent selenation of the latter derivative to 2-selenouridine (Se2U) in the tRNA chain. In Shigella flexneri, this protein is tRNA 2-selenouridine synthase.